Consider the following 359-residue polypeptide: DNA integrity scanning protein DisA (359 aa).

One can recognise a DAC domain in the interval 7–146; the sequence is DDIFRATLAA…GRRYVLDGSA (140 aa). Residues Gly74, Leu92, and 105–109 each bind ATP; that span reads TRHRT.

Belongs to the DisA family. As to quaternary structure, homooctamer. Requires Mg(2+) as cofactor.

It catalyses the reaction 2 ATP = 3',3'-c-di-AMP + 2 diphosphate. Functionally, participates in a DNA-damage check-point that is active prior to asymmetric division when DNA is damaged. DisA forms globular foci that rapidly scan along the chromosomes during sporulation, searching for lesions. When a lesion is present, DisA pauses at the lesion site. This triggers a cellular response that culminates in a temporary block in sporulation initiation. Its function is as follows. Also has diadenylate cyclase activity, catalyzing the condensation of 2 ATP molecules into cyclic di-AMP (c-di-AMP). c-di-AMP acts as a signaling molecule that couples DNA integrity with progression of sporulation. The rise in c-di-AMP level generated by DisA while scanning the chromosome, operates as a positive signal that advances sporulation; upon encountering a lesion, the DisA focus arrests at the damaged site and halts c-di-AMP synthesis. In Frankia casuarinae (strain DSM 45818 / CECT 9043 / HFP020203 / CcI3), this protein is DNA integrity scanning protein DisA.